A 381-amino-acid chain; its full sequence is Creatine kinase M-type (381 aa).

The Phosphagen kinase N-terminal domain maps to 11–98 (KLNYKSEEEY…FDPIIQDRHG (88 aa)). A Phosphagen kinase C-terminal domain is found at 125-367 (YVLSSRVRTG…KLMVEMEKKL (243 aa)). An ATP-binding site is contributed by 128 to 132 (SSRVR). Ser164 carries the post-translational modification Phosphoserine. Thr166 is modified (phosphothreonine). Phosphoserine is present on Ser178. Position 180 is a phosphothreonine (Thr180). His191 contributes to the ATP binding site. At Ser199 the chain carries Phosphoserine. ATP contacts are provided by Arg236 and Arg292. Phosphothreonine occurs at positions 313 and 322. 320–325 (RGTGGV) lines the ATP pocket. Ser372 carries the post-translational modification Phosphoserine.

The protein belongs to the ATP:guanido phosphotransferase family. Dimer of identical or non-identical chains, which can be either B (brain type) or M (muscle type). With MM being the major form in skeletal muscle and myocardium, MB existing in myocardium, and BB existing in many tissues, especially brain.

The catalysed reaction is creatine + ATP = N-phosphocreatine + ADP + H(+). Functionally, reversibly catalyzes the transfer of phosphate between ATP and various phosphogens (e.g. creatine phosphate). Creatine kinase isoenzymes play a central role in energy transduction in tissues with large, fluctuating energy demands, such as skeletal muscle, heart, brain and spermatozoa. The sequence is that of Creatine kinase M-type (CKM) from Oryctolagus cuniculus (Rabbit).